The primary structure comprises 138 residues: Small ribosomal subunit protein uS8c (138 aa).

It belongs to the universal ribosomal protein uS8 family. In terms of assembly, part of the 30S ribosomal subunit.

The protein localises to the plastid. The protein resides in the chloroplast. Functionally, one of the primary rRNA binding proteins, it binds directly to 16S rRNA central domain where it helps coordinate assembly of the platform of the 30S subunit. This chain is Small ribosomal subunit protein uS8c (rps8), found in Oenothera elata subsp. hookeri (Hooker's evening primrose).